Consider the following 181-residue polypeptide: ATP-dependent protease subunit HslV (181 aa).

T11 is a catalytic residue. Na(+) is bound by residues A166, C169, and T172.

Belongs to the peptidase T1B family. HslV subfamily. A double ring-shaped homohexamer of HslV is capped on each side by a ring-shaped HslU homohexamer. The assembly of the HslU/HslV complex is dependent on binding of ATP.

Its subcellular location is the cytoplasm. It catalyses the reaction ATP-dependent cleavage of peptide bonds with broad specificity.. Allosterically activated by HslU binding. In terms of biological role, protease subunit of a proteasome-like degradation complex believed to be a general protein degrading machinery. This is ATP-dependent protease subunit HslV from Chlorobaculum tepidum (strain ATCC 49652 / DSM 12025 / NBRC 103806 / TLS) (Chlorobium tepidum).